The following is a 275-amino-acid chain: Large ribosomal subunit protein uL2 (275 aa).

The segment covering 38 to 53 has biased composition (polar residues); that stretch reads SSKAGRNNNGRITTRH. 2 disordered regions span residues 38-60 and 224-257; these read SSKA…GHKQ and AMNP…KGFR.

Belongs to the universal ribosomal protein uL2 family. In terms of assembly, part of the 50S ribosomal subunit. Forms a bridge to the 30S subunit in the 70S ribosome.

Functionally, one of the primary rRNA binding proteins. Required for association of the 30S and 50S subunits to form the 70S ribosome, for tRNA binding and peptide bond formation. It has been suggested to have peptidyltransferase activity; this is somewhat controversial. Makes several contacts with the 16S rRNA in the 70S ribosome. The protein is Large ribosomal subunit protein uL2 of Burkholderia pseudomallei (strain 1106a).